A 103-amino-acid polypeptide reads, in one-letter code: UPF0058 protein MJ1205 (103 aa).

It belongs to the UPF0058 family.

The polypeptide is UPF0058 protein MJ1205 (Methanocaldococcus jannaschii (strain ATCC 43067 / DSM 2661 / JAL-1 / JCM 10045 / NBRC 100440) (Methanococcus jannaschii)).